An 829-amino-acid chain; its full sequence is Receptor-type tyrosine-protein phosphatase alpha (829 aa).

Positions 1–19 (MDSWFILVLFGSGLIHVSA) are cleaved as a signal peptide. The Extracellular segment spans residues 20-142 (NNATTVSPSL…ETFPPADETP (123 aa)). N-linked (GlcNAc...) asparagine glycosylation is found at asparagine 21, asparagine 47, asparagine 51, asparagine 68, asparagine 80, asparagine 86, asparagine 104, and asparagine 124. Positions 79 to 106 (VNSSHSDNGTRRAASTESGGTTISPNGS) are disordered. The helical transmembrane segment at 143–166 (IIAVMVALSSLLVIVFIIIVLYML) threads the bilayer. Topologically, residues 167-829 (RFKKYKQAGS…DAFSDYANFK (663 aa)) are cytoplasmic. Phosphoserine is present on residues serine 202 and serine 204. Tyrosine-protein phosphatase domains follow at residues 232-528 (FREE…LLEH) and 560-818 (LEEE…VQEY). Substrate contacts are provided by residues aspartate 437, 469-475 (CSAGVGR), and glutamine 513. Cysteine 469 (phosphocysteine intermediate) is an active-site residue. Cysteine 759 functions as the Phosphocysteine intermediate in the catalytic mechanism. At tyrosine 825 the chain carries Phosphotyrosine.

This sequence belongs to the protein-tyrosine phosphatase family. Receptor class 4 subfamily. In terms of assembly, part of a complex comprised of PTPRA, BCAR1, BCAR3 (via SH2 domain), and SRC. Within the complex, interacts (when phosphorylated on Tyr-825) with BCAR3 (via SH2 domain). Interacts with GRB2. Post-translationally, integrin binding to extracellular matrix induces phosphorylation at Tyr-825 which induces PTPRA localization and recruitment of BCAR3, BCAR1 and CRK to focal adhesions. As to expression, widely expressed. Highest expression in brain and kidney.

The protein resides in the cell membrane. The protein localises to the cell junction. Its subcellular location is the focal adhesion. The enzyme catalyses O-phospho-L-tyrosyl-[protein] + H2O = L-tyrosyl-[protein] + phosphate. Tyrosine protein phosphatase which is involved in integrin-mediated focal adhesion formation. Following integrin engagement, specifically recruits BCAR3, BCAR1 and CRK to focal adhesions thereby promoting SRC-mediated phosphorylation of BRAC1 and the subsequent activation of PAK and small GTPase RAC1 and CDC42. The sequence is that of Receptor-type tyrosine-protein phosphatase alpha (Ptpra) from Mus musculus (Mouse).